Reading from the N-terminus, the 370-residue chain is 3-hydroxy-3-methylglutaryl-CoA lyase, cytoplasmic (370 aa).

Glycine 2 carries the N-myristoyl glycine lipid modification. In terms of domain architecture, Pyruvate carboxyltransferase spans valine 78–methionine 345. Arginine 86 is a binding site for substrate. Positions 87, 278, and 280 each coordinate a divalent metal cation. Cysteine 311 is a catalytic residue. Asparagine 320 is a binding site for a divalent metal cation.

Belongs to the HMG-CoA lyase family. Requires a divalent metal cation as cofactor.

The protein localises to the cytoplasm. Its subcellular location is the cytosol. It localises to the endoplasmic reticulum membrane. It carries out the reaction (3S)-3-hydroxy-3-methylglutaryl-CoA = acetoacetate + acetyl-CoA. The protein operates within metabolic intermediate metabolism; (S)-3-hydroxy-3-methylglutaryl-CoA degradation; acetoacetate from (S)-3-hydroxy-3-methylglutaryl-CoA: step 1/1. Non-mitochondrial 3-hydroxy-3-methylglutaryl-CoA lyase that catalyzes a cation-dependent cleavage of (S)-3-hydroxy-3-methylglutaryl-CoA into acetyl-CoA and acetoacetate, a key step in ketogenesis, the products of which support energy production in nonhepatic animal tissues. This chain is 3-hydroxy-3-methylglutaryl-CoA lyase, cytoplasmic (HMGCLL1), found in Homo sapiens (Human).